A 267-amino-acid chain; its full sequence is Hydroxyacylglutathione hydrolase (267 aa).

Residues His55, His57, Asp59, His60, His121, Asp138, and His176 each contribute to the Zn(2+) site.

This sequence belongs to the metallo-beta-lactamase superfamily. Glyoxalase II family. As to quaternary structure, monomer. Zn(2+) is required as a cofactor.

It carries out the reaction an S-(2-hydroxyacyl)glutathione + H2O = a 2-hydroxy carboxylate + glutathione + H(+). The protein operates within secondary metabolite metabolism; methylglyoxal degradation; (R)-lactate from methylglyoxal: step 2/2. Its function is as follows. Thiolesterase that catalyzes the hydrolysis of S-D-lactoyl-glutathione to form glutathione and D-lactic acid. This is Hydroxyacylglutathione hydrolase from Shewanella sp. (strain ANA-3).